Here is a 247-residue protein sequence, read N- to C-terminus: Auxin-responsive protein IAA13 (247 aa).

An EAR-like (transcriptional repression) motif is present at residues 14–18 (LELGL). Gly residues predominate over residues 25 to 40 (GTAAKIGKSGGGGAWG). Disordered regions lie at residues 25 to 44 (GTAAKIGKSGGGGAWGERGR) and 49 to 119 (KDFP…PKDV). Low complexity predominate over residues 62–75 (SASHAGSSPPRSSS). Over residues 87 to 98 (RMNSLVNNQATK) the composition is skewed to polar residues. Residues 106–119 (AGKKKVKDDEPKDV) show a composition bias toward basic and acidic residues. A PB1 domain is found at 129–225 (VGFIKVNMDG…SVKRLRVMKT (97 aa)).

Belongs to the Aux/IAA family. In terms of assembly, homodimers and heterodimers. Interacts with TPL. As to expression, preferentially expressed in stems.

The protein resides in the nucleus. Its function is as follows. Aux/IAA proteins are short-lived transcriptional factors that function as repressors of early auxin response genes at low auxin concentrations. Repression is thought to result from the interaction with auxin response factors (ARFs), proteins that bind to the auxin-responsive promoter element (AuxRE). Formation of heterodimers with ARF proteins may alter their ability to modulate early auxin response genes expression. The protein is Auxin-responsive protein IAA13 (IAA13) of Arabidopsis thaliana (Mouse-ear cress).